Consider the following 474-residue polypeptide: ATP synthase subunit beta 1 (474 aa).

157 to 164 (GGAGVGKT) is a binding site for ATP.

Belongs to the ATPase alpha/beta chains family. As to quaternary structure, F-type ATPases have 2 components, CF(1) - the catalytic core - and CF(0) - the membrane proton channel. CF(1) has five subunits: alpha(3), beta(3), gamma(1), delta(1), epsilon(1). CF(0) has three main subunits: a(1), b(2) and c(9-12). The alpha and beta chains form an alternating ring which encloses part of the gamma chain. CF(1) is attached to CF(0) by a central stalk formed by the gamma and epsilon chains, while a peripheral stalk is formed by the delta and b chains.

The protein resides in the cell inner membrane. The enzyme catalyses ATP + H2O + 4 H(+)(in) = ADP + phosphate + 5 H(+)(out). Functionally, produces ATP from ADP in the presence of a proton gradient across the membrane. The catalytic sites are hosted primarily by the beta subunits. The protein is ATP synthase subunit beta 1 of Polaromonas naphthalenivorans (strain CJ2).